We begin with the raw amino-acid sequence, 714 residues long: Interferon-induced GTP-binding protein Mx2 (714 aa).

Residues 1 to 89 (MSMSYRALKF…QRSKGSENNL (89 aa)) are disordered. Composition is skewed to polar residues over residues 61 to 70 (NNFNQLNLDP) and 79 to 88 (QQRSKGSENN). The Dynamin-type G domain occupies 115 to 386 (DLALPAIAVI…LIWHINKSLP (272 aa)). A G1 motif region spans residues 125 to 132 (GDQSSGKS). Residue 125-132 (GDQSSGKS) coordinates GTP. The tract at residues 150-152 (ITR) is G2 motif. The G3 motif stretch occupies residues 224–227 (DLPG). GTP-binding positions include 224–228 (DLPGI) and 293–296 (TKPD). The G4 motif stretch occupies residues 293 to 296 (TKPD). The segment at 325-328 (KCRG) is G5 motif. The GED domain occupies 622 to 713 (IVEIGVHLNA…ALYEFPHFKS (92 aa)).

It belongs to the TRAFAC class dynamin-like GTPase superfamily. Dynamin/Fzo/YdjA family.

It is found in the cytoplasm. Its subcellular location is the nucleus. Its function is as follows. Interferon-induced dynamin-like GTPase with antiviral activity. This is Interferon-induced GTP-binding protein Mx2 (MX2) from Ovis aries (Sheep).